Here is a 245-residue protein sequence, read N- to C-terminus: Probable inactive carboxylesterase Os04g0669700 (245 aa).

Residues Ser-115 and His-201 each act as charge relay system in the active site.

This sequence belongs to the AB hydrolase superfamily. AB hydrolase 2 family.

The sequence is that of Probable inactive carboxylesterase Os04g0669700 from Oryza sativa subsp. japonica (Rice).